Consider the following 494-residue polypeptide: Cysteine--tRNA ligase (494 aa).

Cys29 serves as a coordination point for Zn(2+). The 'HIGH' region motif lies at 31-41 (VTVYDHCHIGH). Zn(2+) is bound by residues Cys209, His234, and Glu238. The 'KMSKS' region motif lies at 266–270 (KMSKS). Lys269 contacts ATP.

The protein belongs to the class-I aminoacyl-tRNA synthetase family. Monomer. Requires Zn(2+) as cofactor.

It is found in the cytoplasm. The enzyme catalyses tRNA(Cys) + L-cysteine + ATP = L-cysteinyl-tRNA(Cys) + AMP + diphosphate. The polypeptide is Cysteine--tRNA ligase (Geotalea uraniireducens (strain Rf4) (Geobacter uraniireducens)).